The chain runs to 415 residues: Gamma-glutamyl phosphate reductase (415 aa).

This sequence belongs to the gamma-glutamyl phosphate reductase family.

The protein resides in the cytoplasm. It carries out the reaction L-glutamate 5-semialdehyde + phosphate + NADP(+) = L-glutamyl 5-phosphate + NADPH + H(+). It participates in amino-acid biosynthesis; L-proline biosynthesis; L-glutamate 5-semialdehyde from L-glutamate: step 2/2. Functionally, catalyzes the NADPH-dependent reduction of L-glutamate 5-phosphate into L-glutamate 5-semialdehyde and phosphate. The product spontaneously undergoes cyclization to form 1-pyrroline-5-carboxylate. This Dictyoglomus turgidum (strain DSM 6724 / Z-1310) protein is Gamma-glutamyl phosphate reductase.